We begin with the raw amino-acid sequence, 81 residues long: Photosystem I iron-sulfur center (81 aa).

4Fe-4S ferredoxin-type domains are found at residues 1–31 (MAHS…MVPW) and 39–68 (IASA…VRVY). The [4Fe-4S] cluster site is built by Cys11, Cys14, Cys17, Cys21, Cys48, Cys51, Cys54, and Cys58.

The eukaryotic PSI reaction center is composed of at least 11 subunits. It depends on [4Fe-4S] cluster as a cofactor.

It is found in the plastid. Its subcellular location is the chloroplast thylakoid membrane. The enzyme catalyses reduced [plastocyanin] + hnu + oxidized [2Fe-2S]-[ferredoxin] = oxidized [plastocyanin] + reduced [2Fe-2S]-[ferredoxin]. In terms of biological role, apoprotein for the two 4Fe-4S centers FA and FB of photosystem I (PSI); essential for photochemical activity. FB is the terminal electron acceptor of PSI, donating electrons to ferredoxin. The C-terminus interacts with PsaA/B/D and helps assemble the protein into the PSI complex. Required for binding of PsaD and PsaE to PSI. PSI is a plastocyanin-ferredoxin oxidoreductase, converting photonic excitation into a charge separation, which transfers an electron from the donor P700 chlorophyll pair to the spectroscopically characterized acceptors A0, A1, FX, FA and FB in turn. The polypeptide is Photosystem I iron-sulfur center (Welwitschia mirabilis (Tree tumbo)).